A 428-amino-acid chain; its full sequence is Histidine--tRNA ligase (428 aa).

It belongs to the class-II aminoacyl-tRNA synthetase family. In terms of assembly, homodimer.

It localises to the cytoplasm. The enzyme catalyses tRNA(His) + L-histidine + ATP = L-histidyl-tRNA(His) + AMP + diphosphate + H(+). The chain is Histidine--tRNA ligase from Azotobacter vinelandii (strain DJ / ATCC BAA-1303).